The chain runs to 225 residues: Glutathione S-transferase Mu 3 (225 aa).

One can recognise a GST N-terminal domain in the interval 5–92 (SSMVLGYWDI…YIARKHNMCG (88 aa)). Glutathione-binding positions include 11–12 (YW), 50–54 (WLDVK), and 63–64 (NL). A Glycyl lysine isopeptide (Lys-Gly) (interchain with G-Cter in SUMO2) cross-link involves residue K54. K73 is covalently cross-linked (Glycyl lysine isopeptide (Lys-Gly) (interchain with G-Cter in SUMO2)). 76–77 (QS) provides a ligand contact to glutathione. A GST C-terminal domain is found at 94–212 (TEEEKIRVDI…QSDQFFKMPI (119 aa)). Y120 is a binding site for substrate.

It belongs to the GST superfamily. Mu family. Homodimer.

The protein localises to the cytoplasm. It catalyses the reaction RX + glutathione = an S-substituted glutathione + a halide anion + H(+). In terms of biological role, conjugation of reduced glutathione to a wide number of exogenous and endogenous hydrophobic electrophiles. May govern uptake and detoxification of both endogenous compounds and xenobiotics at the testis and brain blood barriers. The sequence is that of Glutathione S-transferase Mu 3 (GSTM3) from Macaca fuscata fuscata (Japanese macaque).